The chain runs to 304 residues: Dihydroorotate dehydrogenase B (NAD(+)), catalytic subunit (304 aa).

FMN contacts are provided by residues Ser21 and 45-46 (KA). Substrate is bound by residues Lys45 and 69–73 (NAIGL). Residues Asn99 and Asn127 each coordinate FMN. Asn127 lines the substrate pocket. The active-site Nucleophile is the Cys130. Residues Lys165 and Ile191 each contribute to the FMN site. A substrate-binding site is contributed by 192–193 (NT). FMN contacts are provided by residues Gly217, 243 to 244 (GG), and 265 to 266 (GT).

It belongs to the dihydroorotate dehydrogenase family. Type 1 subfamily. Heterotetramer of 2 PyrK and 2 PyrD type B subunits. It depends on FMN as a cofactor.

The protein localises to the cytoplasm. The enzyme catalyses (S)-dihydroorotate + NAD(+) = orotate + NADH + H(+). It participates in pyrimidine metabolism; UMP biosynthesis via de novo pathway; orotate from (S)-dihydroorotate (NAD(+) route): step 1/1. Its function is as follows. Catalyzes the conversion of dihydroorotate to orotate with NAD(+) as electron acceptor. The polypeptide is Dihydroorotate dehydrogenase B (NAD(+)), catalytic subunit (pyrD) (Listeria monocytogenes serotype 4b (strain F2365)).